The following is a 739-amino-acid chain: NAD(P)H-quinone oxidoreductase subunit 5, chloroplastic (739 aa).

15 helical membrane passes run Trp9–Val29, Trp40–Ile60, Ile89–Ile109, Leu144–Phe164, Ile184–Glu204, Asn219–Ala239, Thr258–Ala278, Leu280–Ile300, Leu327–Ile347, Ala354–Ser374, Thr396–Ser416, Trp425–Tyr445, Thr542–Ile562, Phe597–Leu617, and Leu719–Ile739.

This sequence belongs to the complex I subunit 5 family. In terms of assembly, NDH is composed of at least 16 different subunits, 5 of which are encoded in the nucleus.

The protein resides in the plastid. Its subcellular location is the chloroplast thylakoid membrane. It carries out the reaction a plastoquinone + NADH + (n+1) H(+)(in) = a plastoquinol + NAD(+) + n H(+)(out). It catalyses the reaction a plastoquinone + NADPH + (n+1) H(+)(in) = a plastoquinol + NADP(+) + n H(+)(out). NDH shuttles electrons from NAD(P)H:plastoquinone, via FMN and iron-sulfur (Fe-S) centers, to quinones in the photosynthetic chain and possibly in a chloroplast respiratory chain. The immediate electron acceptor for the enzyme in this species is believed to be plastoquinone. Couples the redox reaction to proton translocation, and thus conserves the redox energy in a proton gradient. The chain is NAD(P)H-quinone oxidoreductase subunit 5, chloroplastic (ndhF) from Chloranthus spicatus (Chulantree).